The primary structure comprises 173 residues: Bifunctional protein PyrR (173 aa).

A PRPP-binding motif is present at residues 93-105; the sequence is VILVDDVLYTGRT.

This sequence belongs to the purine/pyrimidine phosphoribosyltransferase family. PyrR subfamily. In terms of assembly, homodimer and homohexamer; in equilibrium.

The catalysed reaction is UMP + diphosphate = 5-phospho-alpha-D-ribose 1-diphosphate + uracil. Regulates transcriptional attenuation of the pyrimidine nucleotide (pyr) operon by binding in a uridine-dependent manner to specific sites on pyr mRNA. This disrupts an antiterminator hairpin in the RNA and favors formation of a downstream transcription terminator, leading to a reduced expression of downstream genes. Functionally, also displays a weak uracil phosphoribosyltransferase activity which is not physiologically significant. This chain is Bifunctional protein PyrR, found in Streptococcus pneumoniae (strain 70585).